We begin with the raw amino-acid sequence, 131 residues long: Fumarate reductase subunit C (131 aa).

A run of 3 helical transmembrane segments spans residues 30 to 50 (EGTAVPTVWFSIVLIYGLFAL), 61 to 81 (IGFLQNPVVVILNLITLAAAL), and 110 to 130 (IKGLWVVTAVVTVVILFVALF).

Belongs to the FrdC family. In terms of assembly, part of an enzyme complex containing four subunits: a flavoprotein (FrdA), an iron-sulfur protein (FrdB), and two hydrophobic anchor proteins (FrdC and FrdD).

The protein localises to the cell inner membrane. In terms of biological role, two distinct, membrane-bound, FAD-containing enzymes are responsible for the catalysis of fumarate and succinate interconversion; fumarate reductase is used in anaerobic growth, and succinate dehydrogenase is used in aerobic growth. Anchors the catalytic components of the fumarate reductase complex to the cell inner membrane, binds quinones. This Klebsiella pneumoniae (strain 342) protein is Fumarate reductase subunit C.